The chain runs to 358 residues: Gap junction alpha-5 protein (358 aa).

Residues 1-19 (MGDWSFLGEFLEEVHKHST) lie on the Cytoplasmic side of the membrane. The helical transmembrane segment at 20–40 (VIGKVWLTVLFIFRMLVLGTA) threads the bilayer. Residues 41–76 (AESSWGDEQADFRCDTIQPGCQNVCYDQAFPISHIR) are Extracellular-facing. A helical membrane pass occupies residues 77–97 (YWVLQIIFVSTPSLVYMGHAM). The Cytoplasmic portion of the chain corresponds to 98–164 (HTVRMQEKQK…CTILIRTTME (67 aa)). A helical transmembrane segment spans residues 165-185 (VAFIVGQYLLYGIFLDTLHVC). The Extracellular segment spans residues 186-205 (RRSPCPHPVNCYVSRPTEKN). The helical transmembrane segment at 206–226 (VFIVFMMAVAGLSLFLSLAEL) threads the bilayer. Topologically, residues 227–358 (YHLGWKKIRQ…SKARSDDLSV (132 aa)) are cytoplasmic. 2 disordered regions span residues 242–262 (RQGV…QSLT) and 318–358 (SQKP…DLSV). A phosphoserine mark is found at serine 353 and serine 357.

Belongs to the connexin family. Alpha-type (group II) subfamily. As to quaternary structure, a connexon is composed of a hexamer of connexins. Abundantly expressed in the lung, also expressed in the kidney and heart.

It is found in the cell membrane. The protein localises to the cell junction. The protein resides in the gap junction. Its function is as follows. One gap junction consists of a cluster of closely packed pairs of transmembrane channels, the connexons, through which materials of low MW diffuse from one cell to a neighboring cell. This chain is Gap junction alpha-5 protein (Gja5), found in Mus musculus (Mouse).